The sequence spans 715 residues: MSMFNKVVKEFQWGQHKVRLETGEVARQASGAVIVDVEDTVVLATVVGAKSAKPGQDFFPLTVDYLEKTYSAGKIPGGFFRREGRPSEHETLTSRLIDRPLRPLFPEGFYNEVQVVIHVLSVNPEIPADIPALIGASAALAVSGLPFNGPVGAARVAYIDNAYVLNPTRDQIKASSLDLVVAGTERAVLMVESEADQLSEDVMLGAVVFGHEQMQVAIDAIHELVREGGKPEWDWQPAPKNEPLIARVTELAQNDLLAAYQLRDKQARSTKLKEVYAATSAKLEEDASAAGTVAADKATVGNVLFDIEAKIVRSQILNGEPRIDGRDTRTVRPIEIRTGVLPRTHGSALFTRGETQALVVATLGTKGDEQIIDALEGEYRERFMLHYNMPPFATGETGRVGSPKRREIGHGRLAKRALVKCLPSADEFGYSIRVVSEITESNGSSSMASVCGGCLALMDAGVPMKAHVAGIAMGLILEGNKFAVLTDILGDEDHLGDMDFKVAGTEQGVTALQMDIKIQGITKEIMQVALAQAKEGRMHILGKMTSAVSGANTQLSEFAPRMITIKINPEKIRDVIGKGGSVIRALTEETGTTIDISDDGVVTIASTNSDGMAEAKKRIENITAEIEVGQVYEGTVLKLLDFGAIVNLLPGKDGLLHISEIVNERVKDINDYLKEGQQVKVKVIQTDEKGRVRLSAKALLNEAAAASQSDTPPQQ.

Aspartate 493 and aspartate 499 together coordinate Mg(2+). Residues 560–619 (PRMITIKINPEKIRDVIGKGGSVIRALTEETGTTIDISDDGVVTIASTNSDGMAEAKKRI) form the KH domain. Residues 629–697 (GQVYEGTVLK…EKGRVRLSAK (69 aa)) enclose the S1 motif domain.

It belongs to the polyribonucleotide nucleotidyltransferase family. Mg(2+) is required as a cofactor.

It localises to the cytoplasm. It carries out the reaction RNA(n+1) + phosphate = RNA(n) + a ribonucleoside 5'-diphosphate. In terms of biological role, involved in mRNA degradation. Catalyzes the phosphorolysis of single-stranded polyribonucleotides processively in the 3'- to 5'-direction. This Burkholderia lata (strain ATCC 17760 / DSM 23089 / LMG 22485 / NCIMB 9086 / R18194 / 383) protein is Polyribonucleotide nucleotidyltransferase.